Consider the following 258-residue polypeptide: Tryptophan synthase alpha chain (258 aa).

Residues Glu-52 and Asp-63 each act as proton acceptor in the active site.

It belongs to the TrpA family. Tetramer of two alpha and two beta chains.

It catalyses the reaction (1S,2R)-1-C-(indol-3-yl)glycerol 3-phosphate + L-serine = D-glyceraldehyde 3-phosphate + L-tryptophan + H2O. It functions in the pathway amino-acid biosynthesis; L-tryptophan biosynthesis; L-tryptophan from chorismate: step 5/5. The alpha subunit is responsible for the aldol cleavage of indoleglycerol phosphate to indole and glyceraldehyde 3-phosphate. The protein is Tryptophan synthase alpha chain of Streptococcus pneumoniae serotype 2 (strain D39 / NCTC 7466).